The sequence spans 220 residues: Large ribosomal subunit protein bL21 (220 aa).

The interval 109–158 is disordered; it reads SKKVAAKPATSEEKAAEEKPAKAKKEAAEKGASPRETKAAPLFSAPEGEP. A compositionally biased stretch (basic and acidic residues) spans 118–146; sequence TSEEKAAEEKPAKAKKEAAEKGASPRETK.

The protein belongs to the bacterial ribosomal protein bL21 family. As to quaternary structure, part of the 50S ribosomal subunit. Contacts protein L20.

In terms of biological role, this protein binds to 23S rRNA in the presence of protein L20. The sequence is that of Large ribosomal subunit protein bL21 from Chelativorans sp. (strain BNC1).